The following is a 565-amino-acid chain: MEPKTKKQRSLYIPYAGPVLLEFPLLNKGSAFSMEERRNFNLLGLLPEVVETIEEQAERAWIQYQGFKTEIDKHIYLRNIQDTNETLFYRLVNNHLDEMMPVIYTPTVGAACERFSEIYRRSRGVFISYQNRHNMDDILQNVPNHNIKVIVVTDGERILGLGDQGIGGMGIPIGKLSLYTACGGISPAYTLPVVLDVGTNNQQLLNDPLYMGWRNPRITDDEYYEFVDEFIQAVKQRWPDVLLQFEDFAQKNAMPLLNRYRNEICSFNDDIQGTAAVTVGTLIAASRAAGGQLSEKKIVFLGAGSAGCGIAEMIIAQTQREGLSEEAARQKVFMVDRFGLLTDKMPNLLPFQTKLVQKRENLSDWDTDSDVLSLLDVVRNVKPDILIGVSGQTGLFTEEIIREMHKHCPRPIVMPLSNPTSRVEATPQDIIAWTEGNALVATGSPFNPVVWKDKIYPIAQCNNAFIFPGIGLGVIASGASRITDEMLMSASETLAQYSPLVLNGEGLVLPELKDIQKVSRAIAFAVGKMAQQQGVAVKTSAEALQQAIDDNFWQAEYRDYRRTSI.

Residue Y104 is the Proton donor of the active site. R157 serves as a coordination point for NAD(+). K175 acts as the Proton acceptor in catalysis. A divalent metal cation is bound by residues E246, D247, and D270. Residues D270 and N418 each coordinate NAD(+).

This sequence belongs to the malic enzymes family. As to quaternary structure, homotetramer. The cofactor is Mg(2+). Mn(2+) is required as a cofactor.

It catalyses the reaction (S)-malate + NAD(+) = pyruvate + CO2 + NADH. The catalysed reaction is oxaloacetate + H(+) = pyruvate + CO2. The protein is NAD-dependent malic enzyme of Shigella flexneri serotype 5b (strain 8401).